The sequence spans 406 residues: Probable 4-hydroxyphenylpyruvate dioxygenase 2 (406 aa).

2 VOC domains span residues 22–174 (GFDH…LINR) and 205–363 (EIDH…IFSK). 3 residues coordinate Fe cation: histidine 208, histidine 291, and glutamate 374.

The protein belongs to the 4HPPD family. Fe cation serves as cofactor.

The enzyme catalyses 3-(4-hydroxyphenyl)pyruvate + O2 = homogentisate + CO2. The protein operates within amino-acid degradation; L-phenylalanine degradation; acetoacetate and fumarate from L-phenylalanine: step 3/6. In Aspergillus fumigatus (strain ATCC MYA-4609 / CBS 101355 / FGSC A1100 / Af293) (Neosartorya fumigata), this protein is Probable 4-hydroxyphenylpyruvate dioxygenase 2.